A 1334-amino-acid polypeptide reads, in one-letter code: Nck-associated protein 5-like (1334 aa).

5 disordered regions span residues 1–28 (MSEA…MEPG), 115–146 (LPQI…APLP), 210–234 (TPWR…GPPQ), 266–316 (GEED…SPDT), and 349–711 (PLNG…MVPS). The interval 1–139 (MSEAMDQPAG…PASPSLSSTE (139 aa)) is mediates interaction with CDK5RAP2 and is required for homodimerization and microtubule bundle formation. A coiled-coil region spans residues 28 to 106 (GTCQELLHRL…NQMLSALFQQ (79 aa)). Positions 122–132 (PLQPPSEPPAS) are enriched in pro residues. The span at 358-372 (GQSSSPDQAPPQLSK) shows a compositional bias: polar residues. 4 positions are modified to phosphoserine; by CDK1: S440, S451, S470, and S477. Positions 468–481 (SPSPGGPQLSPQLP) are enriched in low complexity. Positions 484–487 (SRIP) match the (S/T)X(I/L)P motif 1 motif. S493, S496, and S498 each carry phosphoserine. A compositionally biased stretch (polar residues) spans 519–547 (LPTSPSPCYTTPDSTQLRPPQSALSTTLS). Phosphoserine; by CDK1 is present on residues S571 and S577. Over residues 638–649 (PGNSSKKPSQGS) the composition is skewed to polar residues. T659 is modified (phosphothreonine). Residues 750-1146 (RVYSSHSMGA…SGTPSKNLPK (397 aa)) are mediates interaction with beta-tubulin and is required for microtubule bundle formation. S767 bears the Phosphoserine; by CDK1 mark. The disordered stretch occupies residues 782–884 (LAGALCPQVP…EGLAPHSAIE (103 aa)). Residues 810-825 (SPHSSPTKLPSKSPTK) show a composition bias toward low complexity. The short motif at 816-819 (TKLP) is the (S/T)X(I/L)P motif 2 element. The (S/T)X(I/L)P motif 3; required for interaction with MAPRE1 signature appears at 926 to 929 (SKLP). Disordered regions lie at residues 931–953 (LNRR…LRRE), 986–1015 (KAYL…QGQL), and 1030–1183 (LNRV…VPGI). The segment covering 933-942 (RRTEATKNKE) has biased composition (basic and acidic residues). A coiled-coil region spans residues 956–994 (MEARKLEAESLNISKLMAKAEDLRRALEEEKAYLSSRAR). Residues 1033–1050 (VDGKELPSKSWREPKPEY) show a composition bias toward basic and acidic residues. Positions 1079-1090 (GCGKPPGKPSSE) are enriched in low complexity. Residues 1110-1122 (SHFTACGSLTRTL) show a composition bias toward polar residues. Residues 1152–1167 (LDPPPGVPPARPPPLT) are compositionally biased toward pro residues. At S1194 the chain carries Phosphoserine. The span at 1197-1206 (AFPALLPAAP) shows a compositional bias: low complexity. The disordered stretch occupies residues 1197-1334 (AFPALLPAAP…DSLSSCGSQG (138 aa)). A compositionally biased stretch (polar residues) spans 1235–1247 (TFPNTRAAGSSSD). Low complexity predominate over residues 1313-1334 (LETSESLSDSLYDSLSSCGSQG).

In terms of assembly, homodimer. Interacts with CDK5RAP2. Interacts with MAPRE1. Interacts with beta-tubulin. In terms of processing, CDK1/Cyclin B-dependent phosphorylation mediates its dissociation from centrosomes during mitosis.

The protein resides in the cytoplasm. The protein localises to the cytoskeleton. It localises to the microtubule organizing center. It is found in the centrosome. Regulates microtubule organization and stabilization. Promotes microtubule growth and bundling formation and stabilizes microtubules by increasing intense acetylation of microtubules. Both tubulin-binding and homodimer formation are required for NCKAP5L-mediated microtubule bundle formation. In Homo sapiens (Human), this protein is Nck-associated protein 5-like.